The following is a 1108-amino-acid chain: Mediator of RNA polymerase II transcription subunit 14 (1108 aa).

Disordered stretches follow at residues 1-30, 35-54, and 1048-1108; these read MAAV…GGDT, SSEI…DNPL, and QQQR…VDLT. Positions 35–52 are enriched in polar residues; sequence SSEIVQQQTPARSLQSDN. Low complexity predominate over residues 1048–1080; that stretch reads QQQRQPVVQPGQQPQVQNQANGVMNRGPQRPGL.

This sequence belongs to the Mediator complex subunit 14 family. In terms of assembly, component of the Mediator complex.

The protein localises to the nucleus. Its function is as follows. Component of the Mediator complex, a coactivator involved in the regulated transcription of nearly all RNA polymerase II-dependent genes. Mediator functions as a bridge to convey information from gene-specific regulatory proteins to the basal RNA polymerase II transcription machinery. Mediator is recruited to promoters by direct interactions with regulatory proteins and serves as a scaffold for the assembly of a functional preinitiation complex with RNA polymerase II and the general transcription factors. The sequence is that of Mediator of RNA polymerase II transcription subunit 14 (RGR1) from Pyricularia oryzae (strain 70-15 / ATCC MYA-4617 / FGSC 8958) (Rice blast fungus).